The chain runs to 949 residues: Glycine dehydrogenase (decarboxylating) (949 aa).

Lysine 699 is modified (N6-(pyridoxal phosphate)lysine).

The protein belongs to the GcvP family. The glycine cleavage system is composed of four proteins: P, T, L and H. Pyridoxal 5'-phosphate is required as a cofactor.

The enzyme catalyses N(6)-[(R)-lipoyl]-L-lysyl-[glycine-cleavage complex H protein] + glycine + H(+) = N(6)-[(R)-S(8)-aminomethyldihydrolipoyl]-L-lysyl-[glycine-cleavage complex H protein] + CO2. The glycine cleavage system catalyzes the degradation of glycine. The P protein binds the alpha-amino group of glycine through its pyridoxal phosphate cofactor; CO(2) is released and the remaining methylamine moiety is then transferred to the lipoamide cofactor of the H protein. The sequence is that of Glycine dehydrogenase (decarboxylating) from Roseobacter denitrificans (strain ATCC 33942 / OCh 114) (Erythrobacter sp. (strain OCh 114)).